Here is a 300-residue protein sequence, read N- to C-terminus: Bifunctional protein FolD (300 aa).

NADP(+) contacts are provided by residues 168–170 (GRS), Ser193, and Ile234.

This sequence belongs to the tetrahydrofolate dehydrogenase/cyclohydrolase family. Homodimer.

The enzyme catalyses (6R)-5,10-methylene-5,6,7,8-tetrahydrofolate + NADP(+) = (6R)-5,10-methenyltetrahydrofolate + NADPH. The catalysed reaction is (6R)-5,10-methenyltetrahydrofolate + H2O = (6R)-10-formyltetrahydrofolate + H(+). Its pathway is one-carbon metabolism; tetrahydrofolate interconversion. Functionally, catalyzes the oxidation of 5,10-methylenetetrahydrofolate to 5,10-methenyltetrahydrofolate and then the hydrolysis of 5,10-methenyltetrahydrofolate to 10-formyltetrahydrofolate. The chain is Bifunctional protein FolD from Ehrlichia ruminantium (strain Welgevonden).